Consider the following 359-residue polypeptide: S-geranylgeranyl-glutathione receptor P2RY8 (359 aa).

Residues 1 to 19 (MQVPNSTGPDNATLQMLRN) are Extracellular-facing. N5 and N11 each carry an N-linked (GlcNAc...) asparagine glycan. Residues 20–40 (PAIAVALPVVYSLVAAVSIPG) traverse the membrane as a helical segment. Residues 41–57 (NLFSLWVLCRRMGPRSP) are Cytoplasmic-facing. A helical transmembrane segment spans residues 58–78 (SVIFMINLSVTDLMLASVLPF). The Extracellular portion of the chain corresponds to 79 to 88 (QIYYHCNRHH). A helical membrane pass occupies residues 89-109 (WVFGVLLCNVVTVAFYANMYS). Topologically, residues 110–138 (SILTMTCISVERFLGVLYPLSSKRWRRRR) are cytoplasmic. The chain crosses the membrane as a helical span at residues 139–159 (YAVAACAGTWLLLLTALSPLA). At 160 to 187 (RTDLTYPVHALGIITCFDVLKWTMLPSV) the chain is on the extracellular side. Residues 188–208 (AMWAVFLFTIFILLFLIPFVI) traverse the membrane as a helical segment. At 209–237 (TVACYTATILKLLRTEEAHGREQRRRAVG) the chain is on the cytoplasmic side. Residues 238-258 (LAAVVLLAFVTCFAPNNFVLL) traverse the membrane as a helical segment. The Extracellular segment spans residues 259-275 (AHIVSRLFYGKSYYHVY). A helical membrane pass occupies residues 276–296 (KLTLCLSCLNNCLDPFVYYFA). Topologically, residues 297–359 (SREFQLRLRE…PGLQRQESVF (63 aa)) are cytoplasmic. The tract at residues 329–359 (RTTSVRSEAGAHPEGMEGATRPGLQRQESVF) is disordered.

Belongs to the G-protein coupled receptor 1 family. As to expression, barely detectable in normal blood leukocytes. Weaker expression was seen in heart, kidney and lung. Not detected in brain. Expressed in B cells and follicular helper T cells in germinal centers (at protein level).

It localises to the cell membrane. Its function is as follows. G protein-coupled receptor for S-geranylgeranyl-glutathione (GGG), an endogenous metabolite present in lymphoid tissues. Couples the binding of GGG to the activation of GNA13 and downstream repression of AKT activation in lymphocytes defining their positioning and growth within lymphoid organs. In lymphoid follicles, confines B cells and follicular helper T cells in germinal centers (GCs) in response to GGG local gradients established by GGT5 (via GGG catabolism) and ABCC1 (via extracellular transport) with lower concentrations of GGG found in the follicular dendritic cell network region around which germinal centers are formed. In the bone marrow, also in response to GGG gradients established by GGT5 and ABCC1, it restricts chemotactic transmigration of B cells, T cells and NK cells from blood vessels to the bone marrow parenchyma. Contributes to GNA13-dependent pathway that suppresses GC B cell growth. The polypeptide is S-geranylgeranyl-glutathione receptor P2RY8 (Homo sapiens (Human)).